The following is a 100-amino-acid chain: Urease subunit gamma (100 aa).

It belongs to the urease gamma subunit family. Heterotrimer of UreA (gamma), UreB (beta) and UreC (alpha) subunits. Three heterotrimers associate to form the active enzyme.

Its subcellular location is the cytoplasm. The enzyme catalyses urea + 2 H2O + H(+) = hydrogencarbonate + 2 NH4(+). Its pathway is nitrogen metabolism; urea degradation; CO(2) and NH(3) from urea (urease route): step 1/1. The sequence is that of Urease subunit gamma from Mycolicibacterium vanbaalenii (strain DSM 7251 / JCM 13017 / BCRC 16820 / KCTC 9966 / NRRL B-24157 / PYR-1) (Mycobacterium vanbaalenii).